The primary structure comprises 340 residues: 4-amino-5-hydroxymethyl-2-methylpyrimidine phosphate synthase THI5 (340 aa).

Residue Lys62 is modified to N6-(pyridoxal phosphate)lysine. His66 is an active-site residue. 115–118 (GEFG) lines the pyridoxal 5'-phosphate pocket. The CCCFC; essential for catalytic activity, may be the site of iron coordination motif lies at 195 to 199 (CCCFC).

The protein belongs to the NMT1/THI5 family. Homodimer. It depends on Fe cation as a cofactor.

The enzyme catalyses N(6)-(pyridoxal phosphate)-L-lysyl-[4-amino-5-hydroxymethyl-2-methylpyrimidine phosphate synthase] + L-histidyl-[4-amino-5-hydroxymethyl-2-methylpyrimidine phosphate synthase] + 2 Fe(3+) + 4 H2O = L-lysyl-[4-amino-5-hydroxymethyl-2-methylpyrimidine phosphate synthase] + (2S)-2-amino-5-hydroxy-4-oxopentanoyl-[4-amino-5-hydroxymethyl-2-methylpyrimidine phosphate synthase] + 4-amino-2-methyl-5-(phosphooxymethyl)pyrimidine + 3-oxopropanoate + 2 Fe(2+) + 2 H(+). It participates in cofactor biosynthesis; thiamine diphosphate biosynthesis. Responsible for the formation of the pyrimidine heterocycle in the thiamine biosynthesis pathway. Catalyzes the formation of hydroxymethylpyrimidine phosphate (HMP-P) from histidine and pyridoxal phosphate (PLP). The protein uses PLP and the active site histidine to form HMP-P, generating an inactive enzyme. The enzyme can only undergo a single turnover, which suggests it is a suicide enzyme. The sequence is that of 4-amino-5-hydroxymethyl-2-methylpyrimidine phosphate synthase THI5 from Saccharomyces cerevisiae (strain ATCC 204508 / S288c) (Baker's yeast).